The chain runs to 875 residues: Translation initiation factor IF-2 (875 aa).

2 disordered regions span residues 123 to 204 (EKEK…EKPK) and 240 to 278 (ETKE…PVET). Over residues 240–252 (ETKEEKAELEALR) the composition is skewed to basic and acidic residues. A compositionally biased stretch (basic residues) spans 259-268 (PKKKKKKKKK). Over residues 269–278 (KEEEKAPVET) the composition is skewed to basic and acidic residues. The tr-type G domain maps to 379 to 547 (ERPPVVTVMG…NILLVSEILE (169 aa)). The tract at residues 388 to 395 (GHVDHGKT) is G1. 388 to 395 (GHVDHGKT) provides a ligand contact to GTP. The segment at 413–417 (GITQH) is G2. Positions 435-438 (DTPG) are G3. Residues 435-439 (DTPGH) and 489-492 (NKID) contribute to the GTP site. The tract at residues 489–492 (NKID) is G4. Residues 525–527 (SAK) form a G5 region.

This sequence belongs to the TRAFAC class translation factor GTPase superfamily. Classic translation factor GTPase family. IF-2 subfamily.

Its subcellular location is the cytoplasm. In terms of biological role, one of the essential components for the initiation of protein synthesis. Protects formylmethionyl-tRNA from spontaneous hydrolysis and promotes its binding to the 30S ribosomal subunits. Also involved in the hydrolysis of GTP during the formation of the 70S ribosomal complex. The sequence is that of Translation initiation factor IF-2 from Persephonella marina (strain DSM 14350 / EX-H1).